The sequence spans 185 residues: Methanol dehydrogenase activator (185 aa).

Belongs to the Nudix hydrolase family. Homodimer. The cofactor is Mg(2+).

Functionally, involved in the activation of the NAD-dependent methanol dehydrogenase (MDH). MDH activation by Act involves hydrolytic removal of the nicotinamide mononucleotide (NMN) moiety of the NAD cofactor, changing its ping-pong type of reaction mechanism into a ternary complex reaction mechanism. It requires the presence of magnesium ions and is also able to use ADP-ribose. This Bacillus methanolicus protein is Methanol dehydrogenase activator.